A 322-amino-acid polypeptide reads, in one-letter code: Ribosomal RNA small subunit methyltransferase H (322 aa).

Residues 42-44 (GGH), aspartate 62, phenylalanine 86, aspartate 107, and glutamine 114 each bind S-adenosyl-L-methionine.

It belongs to the methyltransferase superfamily. RsmH family.

The protein localises to the cytoplasm. The catalysed reaction is cytidine(1402) in 16S rRNA + S-adenosyl-L-methionine = N(4)-methylcytidine(1402) in 16S rRNA + S-adenosyl-L-homocysteine + H(+). Functionally, specifically methylates the N4 position of cytidine in position 1402 (C1402) of 16S rRNA. The polypeptide is Ribosomal RNA small subunit methyltransferase H (Janthinobacterium sp. (strain Marseille) (Minibacterium massiliensis)).